Reading from the N-terminus, the 91-residue chain is UPF0386 protein Caul_4643 (91 aa).

It belongs to the UPF0386 family.

The protein is UPF0386 protein Caul_4643 of Caulobacter sp. (strain K31).